A 305-amino-acid polypeptide reads, in one-letter code: UDP-3-O-acyl-N-acetylglucosamine deacetylase (305 aa).

Residues His78, His237, and Asp241 each contribute to the Zn(2+) site. His264 functions as the Proton donor in the catalytic mechanism.

It belongs to the LpxC family. It depends on Zn(2+) as a cofactor.

The enzyme catalyses a UDP-3-O-[(3R)-3-hydroxyacyl]-N-acetyl-alpha-D-glucosamine + H2O = a UDP-3-O-[(3R)-3-hydroxyacyl]-alpha-D-glucosamine + acetate. It functions in the pathway glycolipid biosynthesis; lipid IV(A) biosynthesis; lipid IV(A) from (3R)-3-hydroxytetradecanoyl-[acyl-carrier-protein] and UDP-N-acetyl-alpha-D-glucosamine: step 2/6. Catalyzes the hydrolysis of UDP-3-O-myristoyl-N-acetylglucosamine to form UDP-3-O-myristoylglucosamine and acetate, the committed step in lipid A biosynthesis. The sequence is that of UDP-3-O-acyl-N-acetylglucosamine deacetylase from Burkholderia lata (strain ATCC 17760 / DSM 23089 / LMG 22485 / NCIMB 9086 / R18194 / 383).